An 85-amino-acid chain; its full sequence is uncharacterized protein (85 aa).

Positions 17-53 (KKRYEMLVQELLKEDDEEREKILAEELELLLDFLKKA) form a coiled coil.

This is an uncharacterized protein from Archaeoglobus fulgidus (strain ATCC 49558 / DSM 4304 / JCM 9628 / NBRC 100126 / VC-16).